We begin with the raw amino-acid sequence, 509 residues long: Putative 6-phosphofructo-2-kinase/fructose-2,6-bisphosphatase YLR345W (509 aa).

Ser6 carries the post-translational modification Phosphoserine. Residues 6 to 291 (SDDEELLNGL…FFLMNLRQKK (286 aa)) are 6-phosphofructo-2-kinase. 90-98 (GLPATSKTL) serves as a coordination point for ATP. Asp173 acts as the Proton donor/acceptor in catalysis. 212-217 (NIALAL) lines the ATP pocket. Beta-D-fructose 6-phosphate is bound at residue Arg237. Residues 292–466 (GCVYFARCGT…IAHESTLRVL (175 aa)) form a fructose-2,6-bisphosphatase region. Residue Arg298 coordinates beta-D-fructose 2,6-bisphosphate. Residue 415–418 (YKES) participates in ATP binding. Residues Tyr433 and Arg464 each contribute to the beta-D-fructose 2,6-bisphosphate site. 460-464 (ESTLR) contacts ATP.

In the C-terminal section; belongs to the phosphoglycerate mutase family. As to quaternary structure, homodimer.

The protein resides in the cytoplasm. The enzyme catalyses beta-D-fructose 2,6-bisphosphate + H2O = beta-D-fructose 6-phosphate + phosphate. It carries out the reaction beta-D-fructose 6-phosphate + ATP = beta-D-fructose 2,6-bisphosphate + ADP + H(+). Its function is as follows. Synthesis and degradation of fructose 2,6-bisphosphate. The chain is Putative 6-phosphofructo-2-kinase/fructose-2,6-bisphosphatase YLR345W from Saccharomyces cerevisiae (strain ATCC 204508 / S288c) (Baker's yeast).